The sequence spans 323 residues: Methionyl-tRNA formyltransferase (323 aa).

118–121 (SLLP) lines the (6S)-5,6,7,8-tetrahydrofolate pocket.

The protein belongs to the Fmt family.

The catalysed reaction is L-methionyl-tRNA(fMet) + (6R)-10-formyltetrahydrofolate = N-formyl-L-methionyl-tRNA(fMet) + (6S)-5,6,7,8-tetrahydrofolate + H(+). Functionally, attaches a formyl group to the free amino group of methionyl-tRNA(fMet). The formyl group appears to play a dual role in the initiator identity of N-formylmethionyl-tRNA by promoting its recognition by IF2 and preventing the misappropriation of this tRNA by the elongation apparatus. This chain is Methionyl-tRNA formyltransferase, found in Buchnera aphidicola subsp. Baizongia pistaciae (strain Bp).